Here is a 436-residue protein sequence, read N- to C-terminus: GTPase Der (436 aa).

2 EngA-type G domains span residues 4–167 and 175–351; these read PVVA…PKDA and IKFS…DNHE. GTP is bound by residues 10-17, 57-61, 119-122, 181-188, 229-233, and 294-297; these read GRPNVGKS, DTGGI, NKVD, DTAGI, and NKWD. A KH-like domain is found at 352–436; the sequence is QRISSAVLND…PIHIIERRRK (85 aa).

This sequence belongs to the TRAFAC class TrmE-Era-EngA-EngB-Septin-like GTPase superfamily. EngA (Der) GTPase family. In terms of assembly, associates with the 50S ribosomal subunit.

Functionally, GTPase that plays an essential role in the late steps of ribosome biogenesis. The sequence is that of GTPase Der from Ligilactobacillus salivarius (strain UCC118) (Lactobacillus salivarius).